A 299-amino-acid polypeptide reads, in one-letter code: MTDAPVSRCGYVAIVGRPNVGKSTLLNHILGQKLAITSRKPQTTRHNMLGIKTEGEIQAVYVDTPGLHKHNDKALNRYMNRSASSALKDVDVVVFVVDRTRWTDEDQLVLEKVQHVKCPILLAVNKADRLEDKSELLPHLNWLAEQLPQAEIVPISALQGQNLDTLEKLVGERLPESEHFYPEDQITDRSSRFLAAELIREKIMRQLGAELPYQITVEIEEFKQDGPILHIHGLILVERDGQKKIIIGDKGERIKRIGQDARKDMETMFDSKVMLNLWVKVKGGWSDDERALRSLGYLD.

Residues 8 to 176 (RCGYVAIVGR…EKLVGERLPE (169 aa)) enclose the Era-type G domain. The interval 16-23 (GRPNVGKS) is G1. 16–23 (GRPNVGKS) is a GTP binding site. Positions 42-46 (QTTRH) are G2. A G3 region spans residues 63-66 (DTPG). GTP-binding positions include 63 to 67 (DTPGL) and 125 to 128 (NKAD). The tract at residues 125–128 (NKAD) is G4. Residues 155 to 157 (ISA) form a G5 region. The KH type-2 domain occupies 199 to 283 (IREKIMRQLG…MLNLWVKVKG (85 aa)).

It belongs to the TRAFAC class TrmE-Era-EngA-EngB-Septin-like GTPase superfamily. Era GTPase family. In terms of assembly, monomer.

Its subcellular location is the cytoplasm. The protein resides in the cell inner membrane. Its function is as follows. An essential GTPase that binds both GDP and GTP, with rapid nucleotide exchange. Plays a role in 16S rRNA processing and 30S ribosomal subunit biogenesis and possibly also in cell cycle regulation and energy metabolism. This chain is GTPase Era, found in Ectopseudomonas mendocina (strain ymp) (Pseudomonas mendocina).